The chain runs to 319 residues: Transaldolase (319 aa).

Lysine 125 functions as the Schiff-base intermediate with substrate in the catalytic mechanism.

This sequence belongs to the transaldolase family. Type 1 subfamily. As to quaternary structure, homodimer.

Its subcellular location is the cytoplasm. It catalyses the reaction D-sedoheptulose 7-phosphate + D-glyceraldehyde 3-phosphate = D-erythrose 4-phosphate + beta-D-fructose 6-phosphate. It functions in the pathway carbohydrate degradation; pentose phosphate pathway; D-glyceraldehyde 3-phosphate and beta-D-fructose 6-phosphate from D-ribose 5-phosphate and D-xylulose 5-phosphate (non-oxidative stage): step 2/3. Transaldolase is important for the balance of metabolites in the pentose-phosphate pathway. The polypeptide is Transaldolase (Ralstonia pickettii (strain 12J)).